The chain runs to 99 residues: Transmembrane protein 14A (99 aa).

3 consecutive transmembrane segments (helical) span residues Met-1–Lys-21, Gly-24–Tyr-44, and Pro-79–Leu-99.

The protein belongs to the TMEM14 family.

The protein resides in the mitochondrion membrane. It is found in the endoplasmic reticulum membrane. Inhibits apoptosis via negative regulation of the mitochondrial outer membrane permeabilization involved in apoptotic signaling pathway. This chain is Transmembrane protein 14A (TMEM14A), found in Sus scrofa (Pig).